A 232-amino-acid polypeptide reads, in one-letter code: Sugar fermentation stimulation protein homolog (232 aa).

The protein belongs to the SfsA family.

The protein is Sugar fermentation stimulation protein homolog of Geobacter metallireducens (strain ATCC 53774 / DSM 7210 / GS-15).